The chain runs to 551 residues: Dol-P-Man:Man(7)GlcNAc(2)-PP-Dol alpha-1,6-mannosyltransferase (551 aa).

At 1–2 the chain is on the lumenal side; that stretch reads MR. The helical transmembrane segment at 3–23 threads the bilayer; the sequence is WSVLDTVLLTVISFHLIQAPF. At 24–61 the chain is on the cytoplasmic side; sequence TKVEESFNIQAIHDILTYSVFDISQYDHLKFPGVVPRT. A helical transmembrane segment spans residues 62-82; that stretch reads FVGAVIIAMLSRPYLYLSSLI. The Lumenal portion of the chain corresponds to 83 to 89; it reads QTSRPTS. The helical transmembrane segment at 90-110 threads the bilayer; it reads IDVQLVVRGIVGLTNGLSFIY. The Cytoplasmic segment spans residues 111-136; it reads LKNCLQDMFDEITEKKKEENEDKDIY. The chain crosses the membrane as a helical span at residues 137–157; sequence IYDSAGTWFLLFLIGSFHLMF. Residues 158–178 lie on the Lumenal side of the membrane; sequence YSTRTLPNFVMTLPLTNVALG. The helical transmembrane segment at 179 to 199 threads the bilayer; it reads WVLLGRYNAAIFLSALVAIVF. The Cytoplasmic portion of the chain corresponds to 200–202; that stretch reads RLE. Residues 203–223 traverse the membrane as a helical segment; sequence VSALSAGIALFSVIFKKISLF. The Lumenal segment spans residues 224–227; sequence DAIK. The chain crosses the membrane as a helical span at residues 228–248; that stretch reads FGIFGLGLGSAISITVDSYFW. Over 249 to 275 the chain is Cytoplasmic; that stretch reads QEWCLPEVDGFLFNVVAGYASKWGVEP. A helical transmembrane segment spans residues 276-296; that stretch reads VTAYFTHYLRMMFMPPTVLLL. Residues 297 to 303 lie on the Lumenal side of the membrane; it reads NYFGYKL. A helical membrane pass occupies residues 304 to 324; the sequence is APAKLKIVSLASLFHIIVLSF. The Cytoplasmic portion of the chain corresponds to 325-331; that stretch reads QPHKEWR. The helical transmembrane segment at 332 to 352 threads the bilayer; that stretch reads FIIYAVPSIMLLGATGAAHLW. Residues 353-365 lie on the Lumenal side of the membrane; the sequence is ENMKVKKITNVLC. A helical membrane pass occupies residues 366–386; sequence LAILPLSIMTSFFISMAFLYI. Topologically, residues 387 to 417 are cytoplasmic; that stretch reads SRMNYPGGEALTSFNDMIVEKNITNATVHIS. The helical transmembrane segment at 418-438 threads the bilayer; it reads IPPCMTGVTLFGELNYGVYGI. Residues 439–551 lie on the Lumenal side of the membrane; it reads NYDKTENTTL…KRIKQDEKTD (113 aa).

It belongs to the glycosyltransferase 22 family.

It localises to the endoplasmic reticulum membrane. It carries out the reaction an alpha-D-Man-(1-&gt;2)-alpha-D-Man-(1-&gt;2)-alpha-D-Man-(1-&gt;3)-[alpha-D-Man-(1-&gt;2)-alpha-D-Man-(1-&gt;3)-alpha-D-Man-(1-&gt;6)]-beta-D-Man-(1-&gt;4)-beta-D-GlcNAc-(1-&gt;4)-alpha-D-GlcNAc-diphospho-di-trans,poly-cis-dolichol + a di-trans,poly-cis-dolichyl beta-D-mannosyl phosphate = an alpha-D-Man-(1-&gt;2)-alpha-D-Man-(1-&gt;2)-alpha-D-Man-(1-&gt;3)-[alpha-D-Man-(1-&gt;2)-alpha-D-Man-(1-&gt;3)-[alpha-D-Man-(1-&gt;6)]-alpha-D-Man-(1-&gt;6)]-beta-D-Man-(1-&gt;4)-beta-D-GlcNAc-(1-&gt;4)-alpha-D-GlcNAc-diphospho-di-trans,poly-cis-dolichol + a di-trans,poly-cis-dolichyl phosphate + H(+). It participates in protein modification; protein glycosylation. In terms of biological role, mannosyltransferase that operates in the biosynthetic pathway of dolichol-linked oligosaccharides, the glycan precursors employed in protein asparagine (N)-glycosylation. The assembly of dolichol-linked oligosaccharides begins on the cytosolic side of the endoplasmic reticulum membrane and finishes in its lumen. The sequential addition of sugars to dolichol pyrophosphate produces dolichol-linked oligosaccharides containing fourteen sugars, including two GlcNAcs, nine mannoses and three glucoses. Once assembled, the oligosaccharide is transferred from the lipid to nascent proteins by oligosaccharyltransferases. In the lumen of the endoplasmic reticulum, adds the eighth mannose residue in an alpha-1,6 linkage onto Man(7)GlcNAc(2)-PP-dolichol to produce Man(8)GlcNAc(2)-PP-dolichol. This Saccharomyces cerevisiae (strain ATCC 204508 / S288c) (Baker's yeast) protein is Dol-P-Man:Man(7)GlcNAc(2)-PP-Dol alpha-1,6-mannosyltransferase (ALG12).